The following is a 412-amino-acid chain: Multidrug resistance protein MdtA (412 aa).

The N-terminal stretch at 1 to 21 (MKGSNIRRWGAALAVVIIAGA) is a signal peptide. Disordered regions lie at residues 33–53 (GSGA…RHGR) and 389–412 (VVTA…GARS).

It belongs to the membrane fusion protein (MFP) (TC 8.A.1) family. In terms of assembly, part of a tripartite efflux system composed of MdtA, MdtB and MdtC.

The protein resides in the cell inner membrane. This Klebsiella pneumoniae subsp. pneumoniae (strain ATCC 700721 / MGH 78578) protein is Multidrug resistance protein MdtA.